We begin with the raw amino-acid sequence, 481 residues long: Protein nucleotidyltransferase YdiU (481 aa).

Residues glycine 85, glycine 87, arginine 88, lysine 108, aspartate 120, glycine 121, arginine 172, and arginine 179 each coordinate ATP. Catalysis depends on aspartate 248, which acts as the Proton acceptor. Mg(2+) is bound by residues asparagine 249 and aspartate 258. Aspartate 258 is an ATP binding site.

Belongs to the SELO family. Mg(2+) is required as a cofactor. The cofactor is Mn(2+).

The catalysed reaction is L-seryl-[protein] + ATP = 3-O-(5'-adenylyl)-L-seryl-[protein] + diphosphate. It catalyses the reaction L-threonyl-[protein] + ATP = 3-O-(5'-adenylyl)-L-threonyl-[protein] + diphosphate. It carries out the reaction L-tyrosyl-[protein] + ATP = O-(5'-adenylyl)-L-tyrosyl-[protein] + diphosphate. The enzyme catalyses L-histidyl-[protein] + UTP = N(tele)-(5'-uridylyl)-L-histidyl-[protein] + diphosphate. The catalysed reaction is L-seryl-[protein] + UTP = O-(5'-uridylyl)-L-seryl-[protein] + diphosphate. It catalyses the reaction L-tyrosyl-[protein] + UTP = O-(5'-uridylyl)-L-tyrosyl-[protein] + diphosphate. In terms of biological role, nucleotidyltransferase involved in the post-translational modification of proteins. It can catalyze the addition of adenosine monophosphate (AMP) or uridine monophosphate (UMP) to a protein, resulting in modifications known as AMPylation and UMPylation. The chain is Protein nucleotidyltransferase YdiU from Cereibacter sphaeroides (strain KD131 / KCTC 12085) (Rhodobacter sphaeroides).